The following is a 533-amino-acid chain: Acid-sensing ion channel 2 (533 aa).

Residues 1–16 (MDLKEACGSEASRETE) show a composition bias toward basic and acidic residues. Residues 1–23 (MDLKEACGSEASRETESGGMGSL) are disordered. The Cytoplasmic segment spans residues 1–68 (MDLKEACGSE…STSRRLLWSA (68 aa)). Residues 69-89 (ALLASLVLLVLESTERLAYFL) form a helical membrane-spanning segment. Residues 90-445 (SYPHVTSVDA…ETIEQKKAYE (356 aa)) lie on the Extracellular side of the membrane. 6 cysteine pairs are disulfide-bonded: cysteine 113/cysteine 214, cysteine 310/cysteine 385, cysteine 328/cysteine 381, cysteine 332/cysteine 379, cysteine 341/cysteine 363, and cysteine 343/cysteine 355. A glycan (N-linked (GlcNAc...) asparagine) is linked at asparagine 163. N-linked (GlcNAc...) asparagine glycans are attached at residues asparagine 386 and asparagine 413. A helical transmembrane segment spans residues 446-466 (VAGLLGDIGGQMGLFIGASIL). A GAS motif; ion selectivity filter motif is present at residues 462 to 464 (GAS). The Cytoplasmic portion of the chain corresponds to 467 to 533 (TLLELFDYAY…TLGTLEEIAC (67 aa)).

Belongs to the amiloride-sensitive sodium channel (TC 1.A.6) family. ASIC2 subfamily. In terms of assembly, can form homotrimers; probably non-functional. Heterotrimer; could form functional heterotrimers producing channel with specific properties depending on their composition. As to expression, expressed in central nervous system.

The protein resides in the cell membrane. It carries out the reaction Na(+)(in) = Na(+)(out). With respect to regulation, inhibited by the diuretic drug amiloride. Functionally, could form pH-gated heterotrimeric sodium channels that act as postsynaptic excitatory sensors in the nervous system, generating rapid, transient inward currents that fully desensitize upon extracellular acidification. The polypeptide is Acid-sensing ion channel 2 (asic2) (Danio rerio (Zebrafish)).